The following is a 29-amino-acid chain: Cyclotide mobo-A (29 aa).

The cyclopeptide (Gly-Asn) cross-link spans 1 to 29 (GFPTCGETCTLGTCNTPGCTCSWPICTRN). 3 disulfides stabilise this stretch: Cys5/Cys19, Cys9/Cys21, and Cys14/Cys26.

This sequence belongs to the cyclotide family. Moebius subfamily. In terms of processing, this is a cyclic peptide.

Probably participates in a plant defense mechanism. The chain is Cyclotide mobo-A from Melicytus obovatus (Hymenanthera obovata).